We begin with the raw amino-acid sequence, 299 residues long: MIHNNRLRIVMQKNWKLSNDSKDLLARCGIKINLYKKKLIAFSENMPIVYICVRDDDIPGLIMDGIVDVGIIGENVLEEEVLSRKLRSDNIDYIKLKRLDFGTCRLSLAIPLDKTYKDISCLNNSRIATSYPHLLKKYFDKNNITFKSCMLNGSVEVAPRAGLSDAICDLVSTGATLEANGLREVQVIFRSKACLICKVGDISSEKRNVLNTLLTRIQGVIKARESKYIMLHAPIKRLEEVVQLLHGAERPTILKLAGDNTRVAMHMVSSETLFWETMENLKLLGASSILVLPIEKMME.

The protein belongs to the ATP phosphoribosyltransferase family. Long subfamily. As to quaternary structure, equilibrium between an active dimeric form, an inactive hexameric form and higher aggregates. Interconversion between the various forms is largely reversible and is influenced by the natural substrates and inhibitors of the enzyme. Requires Mg(2+) as cofactor.

The protein localises to the cytoplasm. The catalysed reaction is 1-(5-phospho-beta-D-ribosyl)-ATP + diphosphate = 5-phospho-alpha-D-ribose 1-diphosphate + ATP. Its pathway is amino-acid biosynthesis; L-histidine biosynthesis; L-histidine from 5-phospho-alpha-D-ribose 1-diphosphate: step 1/9. Its activity is regulated as follows. Feedback inhibited by histidine. Functionally, catalyzes the condensation of ATP and 5-phosphoribose 1-diphosphate to form N'-(5'-phosphoribosyl)-ATP (PR-ATP). Has a crucial role in the pathway because the rate of histidine biosynthesis seems to be controlled primarily by regulation of HisG enzymatic activity. The sequence is that of ATP phosphoribosyltransferase from Buchnera aphidicola subsp. Schlechtendalia chinensis.